Here is a 399-residue protein sequence, read N- to C-terminus: Dual-specificity RNA methyltransferase RlmN (399 aa).

The active-site Proton acceptor is Glu-120. One can recognise a Radical SAM core domain in the interval 126–367; it reads EEGRGTLCVS…SPVRTPRGRD (242 aa). A disulfide bond links Cys-133 and Cys-372. 3 residues coordinate [4Fe-4S] cluster: Cys-140, Cys-144, and Cys-147. S-adenosyl-L-methionine contacts are provided by residues 198–199, Ser-230, 252–254, and Asn-329; these read GE and SLH. Cys-372 functions as the S-methylcysteine intermediate in the catalytic mechanism.

This sequence belongs to the radical SAM superfamily. RlmN family. [4Fe-4S] cluster serves as cofactor.

It is found in the cytoplasm. The enzyme catalyses adenosine(2503) in 23S rRNA + 2 reduced [2Fe-2S]-[ferredoxin] + 2 S-adenosyl-L-methionine = 2-methyladenosine(2503) in 23S rRNA + 5'-deoxyadenosine + L-methionine + 2 oxidized [2Fe-2S]-[ferredoxin] + S-adenosyl-L-homocysteine. The catalysed reaction is adenosine(37) in tRNA + 2 reduced [2Fe-2S]-[ferredoxin] + 2 S-adenosyl-L-methionine = 2-methyladenosine(37) in tRNA + 5'-deoxyadenosine + L-methionine + 2 oxidized [2Fe-2S]-[ferredoxin] + S-adenosyl-L-homocysteine. In terms of biological role, specifically methylates position 2 of adenine 2503 in 23S rRNA and position 2 of adenine 37 in tRNAs. m2A2503 modification seems to play a crucial role in the proofreading step occurring at the peptidyl transferase center and thus would serve to optimize ribosomal fidelity. The chain is Dual-specificity RNA methyltransferase RlmN from Parvibaculum lavamentivorans (strain DS-1 / DSM 13023 / NCIMB 13966).